The following is a 290-amino-acid chain: MSENHVPAWKRIALKRQTISSGDESKEKGQSNLIDDDPLNITTHLSTGNLTKKEKKRIINGESKSSTKKGKRVSKPGTKKKEKLSKDEKNSKKNKILKDQLRYLIEFFRTKSESKFPTGILELESVKENYGDSLIKDEPSESGVVEVWKFSKQKQNWLIKHFFNLDEIPSVYNDLLLLYFRDLQGKSKEELISKCKGKLKQWNDYVEDQETKIKALIAEDKASEPINGEEKEEGEKDGNAEQGKQKEVQDEQEEVQMPNKELVQRSLKLLEIWKNDDSEQIELKNFFVDV.

2 disordered regions span residues 17 to 91 (QTIS…EKNS) and 220 to 259 (DKAS…QMPN). Polar residues predominate over residues 40–50 (NITTHLSTGNL). Residues 66-83 (STKKGKRVSKPGTKKKEK) show a composition bias toward basic residues. Over residues 233 to 249 (EGEKDGNAEQGKQKEVQ) the composition is skewed to basic and acidic residues.

This is an uncharacterized protein from Saccharomyces cerevisiae (strain ATCC 204508 / S288c) (Baker's yeast).